Consider the following 770-residue polypeptide: ARF GTPase-activating protein GIT1 (770 aa).

The Arf-GAP domain maps to 1–124; it reads MSRKGPRAEV…AFVHKLPCRD (124 aa). The segment at 1–124 is interaction with gamma-tubulin and localization to the centrosome; the sequence is MSRKGPRAEV…AFVHKLPCRD (124 aa). Residues 11 to 34 form a C4-type zinc finger; sequence CADCSAPDPGWASISRGVLVCDEC. 3 ANK repeats span residues 132–161, 166–195, and 199–228; these read DLSK…QANF, KGTT…DPGS, and NGRT…ELTD. Position 224 is a phosphotyrosine (Tyr-224). Positions 245 to 374 are interaction with PCLO; the sequence is HYIIPQMADR…QGKSLSSPTD (130 aa). Residues 253-424 are interaction with PTK2/FAK1; that stretch reads DRSRQKCMSQ…NRARSMDSSD (172 aa). Residues 254 to 376 are interaction with ARHGEF7; it reads RSRQKCMSQS…KSLSSPTDNL (123 aa). A disordered region spans residues 363–425; it reads RQQGKSLSSP…RARSMDSSDL (63 aa). Over residues 366–383 the composition is skewed to polar residues; the sequence is GKSLSSPTDNLELSARSQ. Residues Ser-368 and Ser-371 each carry the phosphoserine modification. Position 373 is a phosphothreonine (Thr-373). The segment at 375-596 is interaction with NCK2 and GRIN3A; the sequence is NLELSARSQS…QEGSRHASKL (222 aa). Positions 375 to 596 are required for localization at synapses; that stretch reads NLELSARSQS…QEGSRHASKL (222 aa). 2 positions are modified to phosphoserine: Ser-379 and Ser-384. Tyr-392 carries the phosphotyrosine modification. Residues Ser-394 and Ser-397 each carry the phosphoserine modification. The span at 394-403 shows a compositional bias: acidic residues; it reads SVASDEDTDQ. Thr-401 carries the post-translational modification Phosphothreonine. Phosphoserine is present on residues Ser-419, Ser-422, and Ser-426. The interval 420–475 is interaction with MAPK1; sequence MDSSDLSDGAVTLQEYLELKKALATSEAKVQQLMKVNSSLSDELRRLQREIHKLQA. The tract at residues 429–629 is interaction with IKBKG; that stretch reads AVTLQEYLEL…EGKRFLELSK (201 aa). The stretch at 449–483 forms a coiled coil; sequence VQQLMKVNSSLSDELRRLQREIHKLQAENLQLRQP. Phosphoserine is present on residues Ser-507 and Ser-545. At Thr-546 the chain carries Phosphothreonine. 2 positions are modified to phosphotyrosine: Tyr-554 and Tyr-563. Residues Ser-570, Ser-580, Ser-601, and Ser-605 each carry the phosphoserine modification. Residues 578-588 are compositionally biased toward polar residues; the sequence is PSSPLLSCSQE. The segment at 578–615 is disordered; sequence PSSPLLSCSQEGSRHASKLSRHGSGADSDYENTQSGDP. Thr-610 carries the phosphothreonine modification. Ser-639 is subject to Phosphoserine. Positions 646-770 are interaction with PXN and TGFB1I1; that stretch reads PGLPSTEDVI…VTITTREKKQ (125 aa).

As to quaternary structure, forms homodimers and possibly oligomers. May forms heterooligomers with GIT2. Interacts with G protein-coupled receptor kinases, including GRK2, GRK3, GRK5 and GRK6. Interacts with PPFIA1, PPFIA2 and PPFIA4. Interacts with GRIP1 and forms a ternary complex with PPFIA1 and GRIP1. Directly interacts with ARHGEF7/beta-PIX, forming in vitro a heptameric complex made of a GIT1 dimer and an ARHGEF7 trimer. Directly interacts with PXN/paxillin; this interaction is enhanced in the presence of ARHGEF7. Directly interacts (via C-terminus) with TGFB1I1/Hic-5 (via LD motif 3). Directly interacts with PTK2/FAK1. May interact with PTK2B/PYK2; this interaction may be indirect. Interacts with AMPA receptors GRIA2/3. Directly interacts with protein Piccolo/PCLO. Forms a complex with Ephrin-B1/EFNB1 and NCK2/GRB4 (via SH2); this interaction is important for spine morphogenesis and synapse formation. Interaction with NCK2 is transient and depends upon GIT1 phosphorylation at Tyr-392. Interacts with GRIN3A/GluN3A (via C-terminus); this interaction competes with GIT1 interaction with ARHGEF7 and limits synaptic localization of GIT1. Interacts with IKBKG/NEMO in resting bone mesenchymal stem cells, as well as in TNF-stimulated cells; this interaction may increase IKBKG affinity for 'Lys-63'-linked polyubiquitin chains. Interacts with GABA(A) receptors, including GABRB3 and GABRG2. Interacts with SCRIB. Interacts (via N- and C-terminus) with ENTR1/SDCCAG3 (via N-terminus); this interaction is direct. May form a tripartite complex with ENTR1 and PTPN13. Interacts with YWHAZ. Interacts with PAK1. Interacts with PAK3. Directly interacts (via N-terminus) with gamma-tubulin. Interacts with MAPK1 and MAPK3; this interaction is required for MAPK1/3 recruitment to focal adhesions. In terms of processing, phosphorylated on tyrosine residues by PTK2/FAK1 and SRC in growing fibroblasts. Phosphorylation at Tyr-392 is induced by activation of Ephrin-B1/EFNB1 and catalyzed by SRC family kinases. It is required for the interaction with NCK2 and for GIT1 recruitment to synapses in hippocampal neurons. As to expression, expressed in the brain (at protein level). Also expressed at high levels in lung and heart. In lung, expressed in endothelial cells, especially in capillaries; also expressed in smooth muscle and epithelial cells of bronchi (at protein level). Expressed in bone marrow mesenchymal stem cells, as well as in osteoclasts and bone marrow-derived macrophages (at protein level).

The protein localises to the cytoplasm. It is found in the presynapse. The protein resides in the postsynapse. It localises to the postsynaptic density. Its subcellular location is the cell junction. The protein localises to the focal adhesion. It is found in the cell projection. The protein resides in the lamellipodium. It localises to the cytoskeleton. Its subcellular location is the microtubule organizing center. The protein localises to the centrosome. It is found in the spindle pole. In terms of biological role, GTPase-activating protein for ADP ribosylation factor family members, including ARF1. Multidomain scaffold protein that interacts with numerous proteins and therefore participates in many cellular functions, including receptor internalization, focal adhesion remodeling, and signaling by both G protein-coupled receptors and tyrosine kinase receptors. Through PAK1 activation, positively regulates microtubule nucleation during interphase. Plays a role in the regulation of cytokinesis; for this function, may act in a pathway also involving ENTR1 and PTPN13. May promote cell motility both by regulating focal complex dynamics and by the activation of RAC1. May act as scaffold for MAPK1/3 signal transduction, recruiting MAPK1/3 to focal adhesions after EGF stimulation via a Src-dependent pathway, hence stimulating cell migration. Plays a role in brain development and function. Involved in the regulation of spine density and synaptic plasticity that is required for processes involved in learning. Plays an important role in dendritic spine morphogenesis and synapse formation. In hippocampal neurons, recruits guanine nucleotide exchange factors (GEFs), such as ARHGEF7/beta-PIX, to the synaptic membrane. These in turn locally activate RAC1, which is an essential step for spine morphogenesis and synapse formation. May contribute to the organization of presynaptic active zones through oligomerization and formation of a Piccolo/PCLO-based protein network, which includes ARHGEF7/beta-PIX and FAK1. In neurons, through its interaction with liprin-alpha family members, may be required for AMPA receptor (GRIA2/3) proper targeting to the cell membrane. In complex with GABA(A) receptors and ARHGEF7, plays a crucial role in regulating GABA(A) receptor synaptic stability, maintaining GPHN/gephyrin scaffolds and hence GABAergic inhibitory synaptic transmission, by locally coordinating RAC1 and PAK1 downstream effector activity, leading to F-actin stabilization. May also be important for RAC1 downstream signaling pathway through PAK3 and regulation of neuronal inhibitory transmission at presynaptic input. Required for successful bone regeneration during fracture healing. The function in intramembranous ossification may, at least partly, exerted by macrophages in which GIT1 is a key negative regulator of redox homeostasis, IL1B production, and glycolysis, acting through the ERK1/2/NRF2/NFE2L2 axis. May play a role in angiogenesis during fracture healing. In this process, may regulate activation of the canonical NF-kappa-B signal in bone mesenchymal stem cells by enhancing the interaction between NEMO and 'Lys-63'-ubiquitinated RIPK1/RIP1, eventually leading to enhanced production of VEGFA and others angiogenic factors. Essential for VEGF signaling through the activation of phospholipase C-gamma and ERK1/2, hence may control endothelial cell proliferation and angiogenesis. This is ARF GTPase-activating protein GIT1 (Git1) from Mus musculus (Mouse).